The primary structure comprises 252 residues: U2 small nuclear ribonucleoprotein A' (252 aa).

LRR repeat units lie at residues 41 to 62 (PHDAIDFTDNDIQVLGNFPLSP), 63 to 84 (RIRTLLLARNRIAQIQSTLPNA), and 87 to 108 (NLKNLVLASNNIGELADLEVLG). The 39-residue stretch at 121-159 (NPVTKKENYRYWVLWLCPQVRFLDYVKVKDAERQKAKEL) folds into the LRRCT domain.

This sequence belongs to the U2 small nuclear ribonucleoprotein A family. As to quaternary structure, associated with the spliceosome.

It is found in the nucleus. Functionally, involved in pre-mRNA splicing. The polypeptide is U2 small nuclear ribonucleoprotein A' (lea-1) (Neurospora crassa (strain ATCC 24698 / 74-OR23-1A / CBS 708.71 / DSM 1257 / FGSC 987)).